The following is a 114-amino-acid chain: Small ribosomal subunit protein uS17 (114 aa).

It belongs to the universal ribosomal protein uS17 family. As to quaternary structure, part of the 30S ribosomal subunit.

In terms of biological role, one of the primary rRNA binding proteins, it binds specifically to the 5'-end of 16S ribosomal RNA. The polypeptide is Small ribosomal subunit protein uS17 (Aeropyrum pernix (strain ATCC 700893 / DSM 11879 / JCM 9820 / NBRC 100138 / K1)).